Consider the following 136-residue polypeptide: Ig kappa chain V-V region MOPC 21 (136 aa).

Residues 1–29 (MHQTSMGIKMESHTLVFISILLCLYGADG) form the signal peptide. The interval 30 to 52 (NIVMTQSPKSMSMSVGERVTLTC) is framework-1. Residues 53–63 (KASENVVTYVS) are complementarity-determining-1. The segment at 64–78 (WYQQKPEQSPKLLIY) is framework-2. Positions 79-85 (GASNRYT) are complementarity-determining-2. The segment at 86–117 (GVPDRFTGSGSATDFTLTISSVQAEDLADYHC) is framework-3. The complementarity-determining-3 stretch occupies residues 118-126 (GQGYSYPYT). Residues 127–136 (FGGGTKLEIK) form a framework-4 region.

The protein is Ig kappa chain V-V region MOPC 21 of Mus musculus (Mouse).